Consider the following 155-residue polypeptide: 2-C-methyl-D-erythritol 2,4-cyclodiphosphate synthase (155 aa).

The a divalent metal cation site is built by Asp8 and His10. Residues 8–10 (DVH) and 34–35 (HS) contribute to the 4-CDP-2-C-methyl-D-erythritol 2-phosphate site. Residue His42 participates in a divalent metal cation binding. Residues 56 to 58 (DIG), 61 to 65 (FPDSD), 100 to 106 (AQKPKML), 132 to 135 (TTEE), Phe139, and Lys142 contribute to the 4-CDP-2-C-methyl-D-erythritol 2-phosphate site.

This sequence belongs to the IspF family. Homotrimer. Requires a divalent metal cation as cofactor.

It catalyses the reaction 4-CDP-2-C-methyl-D-erythritol 2-phosphate = 2-C-methyl-D-erythritol 2,4-cyclic diphosphate + CMP. The protein operates within isoprenoid biosynthesis; isopentenyl diphosphate biosynthesis via DXP pathway; isopentenyl diphosphate from 1-deoxy-D-xylulose 5-phosphate: step 4/6. Its function is as follows. Involved in the biosynthesis of isopentenyl diphosphate (IPP) and dimethylallyl diphosphate (DMAPP), two major building blocks of isoprenoid compounds. Catalyzes the conversion of 4-diphosphocytidyl-2-C-methyl-D-erythritol 2-phosphate (CDP-ME2P) to 2-C-methyl-D-erythritol 2,4-cyclodiphosphate (ME-CPP) with a corresponding release of cytidine 5-monophosphate (CMP). The chain is 2-C-methyl-D-erythritol 2,4-cyclodiphosphate synthase from Clostridium botulinum (strain 657 / Type Ba4).